We begin with the raw amino-acid sequence, 496 residues long: Acyltransferase clz6 (496 aa).

Catalysis depends on His-163, which acts as the Proton acceptor.

It belongs to the plant acyltransferase family. Monomer.

The protein operates within secondary metabolite biosynthesis. Acyltransferase; part of the gene cluster that mediates the biosynthesis of squalestatin S1 (SQS1, also known as zaragozic acid A), a heavily oxidized fungal polyketide that offers potent cholesterol lowering activity by targeting squalene synthase (SS). SQS1 is composed of a 2,8-dioxobicyclic[3.2.1]octane-3,4,5-tricarboxyclic acid core that is connected to two lipophilic polyketide arms. These initial steps feature the priming of an unusual benzoic acid starter unit onto the highly reducing polyketide synthase clz14, followed by oxaloacetate extension and product release to generate a tricarboxylic acid containing product. The phenylalanine ammonia lyase (PAL) clz10 and the acyl-CoA ligase clz12 are involved in transforming phenylalanine into benzoyl-CoA. The citrate synthase-like protein clz17 is involved in connecting the C-alpha-carbons of the hexaketide chain and oxaloacetate to afford the tricarboxylic acid unit. The potential hydrolytic enzymes, clz11 and clz13, are in close proximity to pks2 and may participate in product release. On the other side, the tetraketide arm is synthesized by a the squalestatin tetraketide synthase clz2 and enzymatically esterified to the core in the last biosynthetic step, by the acetyltransferase clz6. The biosynthesis of the tetraketide must involve 3 rounds of chain extension. After the first and second rounds methyl-transfer occurs, and in all rounds of extension the ketoreductase and dehydratase are active. The enoyl reductase and C-MeT of clz2 are not active in the final round of extension. The acetyltransferase clz6 appears to have a broad substrate selectivity for its acyl CoA substrate, allowing the in vitro synthesis of novel squalestatins. The biosynthesis of SQS1 requires several oxidative steps likely performed by oxidoreductases clz3, clz15 and clz16. Finally, in support of the identification of the cluster as being responsible for SQS1 production, the cluster contains a gene encoding a putative squalene synthase (SS) clz20, suggesting a likely mechanism for self-resistance. This is Acyltransferase clz6 from Cochliobolus lunatus (Filamentous fungus).